We begin with the raw amino-acid sequence, 305 residues long: Protein hrde-2 (305 aa).

Disordered stretches follow at residues 211–233 and 267–305; these read AEMVPSNTTGSSGSPMSTAPVPA and EMSNDEYSPDESENDENEYDYENAARYDDGYDEGHEYCQ. The span at 215-227 shows a compositional bias: polar residues; sequence PSNTTGSSGSPMS. Over residues 268–287 the composition is skewed to acidic residues; it reads MSNDEYSPDESENDENEYDY. Residues 289–305 show a composition bias toward basic and acidic residues; sequence NAARYDDGYDEGHEYCQ.

In terms of tissue distribution, expressed throughout the male and female germline.

The protein localises to the nucleus. In terms of biological role, plays a role in germline RNA interference (RNAi), and in particular is required for piwi-interacting RNA (piRNA) gene silencing. Facilitates the binding of the argonaut protein hrde-1 to small interfering RNAs (siRNAs) targets that are required for transgenerational epigenetic inheritance and germline immortality. This is Protein hrde-2 from Caenorhabditis elegans.